We begin with the raw amino-acid sequence, 1237 residues long: Phosphorylase b kinase regulatory subunit alpha, skeletal muscle isoform (1237 aa).

Phosphoserine occurs at positions 629, 729, 735, and 758. Residues 810 to 840 (LTELYGKVGKIRHWGLIRYISGILRKKVEAL) are calmodulin-binding. S972 bears the Phosphoserine; by autocatalysis mark. The residue at position 981 (S981) is a Phosphoserine. S985 and S1007 each carry phosphoserine; by autocatalysis. A Phosphoserine; by PKA modification is found at S1018. A phosphoserine mark is found at S1020, S1023, and S1030. The interval 1021–1069 (TESQPNGGHSLGADLMSPSFLSPGTSVTPSSGSFPGHHTSKDSRQGQWQ) is disordered. Over residues 1042–1056 (SPGTSVTPSSGSFPG) the composition is skewed to low complexity. Positions 1060–1100 (SKDSRQGQWQRRRRLDGALNRVPIGFYQKVWKVLQKCHGLS) are calmodulin-binding. S1127 carries the post-translational modification Phosphoserine. C1234 carries the S-farnesyl cysteine lipid modification.

It belongs to the phosphorylase b kinase regulatory chain family. In terms of assembly, hexadecamer of 4 heterotetramers, each composed of alpha, beta, gamma, and delta subunits. Alpha (PHKA1 or PHKA2) and beta (PHKB) are regulatory subunits, gamma (PHKG1 or PHKG2) is the catalytic subunit, and delta is calmodulin. In terms of processing, phosphorylation of Ser-1018 by PKA stimulates the dephosphorylation of the beta subunit and, thus, reverses the initial stimulation of PHK by the faster beta-subunit phosphorylation by PKA, that occurs in muscle in response to adrenaline. Post-translationally, cys-1234 is farnesylated, but the C-terminal tripeptide is not removed and the cysteine carboxyl is not methylated. Isoform 1 predominates in muscle, heart, brain and testis. Isoforms 1 and 2 are expressed in similar quantities in the other tissues. Isoform 3 is highly expressed in slow muscle and heart.

It is found in the cell membrane. It participates in glycan biosynthesis; glycogen metabolism. By phosphorylation of various serine residues and by calcium. In terms of biological role, phosphorylase b kinase catalyzes the phosphorylation of serine in certain substrates, including troponin I. The alpha chain may bind calmodulin. This chain is Phosphorylase b kinase regulatory subunit alpha, skeletal muscle isoform (PHKA1), found in Oryctolagus cuniculus (Rabbit).